Here is a 142-residue protein sequence, read N- to C-terminus: ATP synthase epsilon chain (142 aa).

This sequence belongs to the ATPase epsilon chain family. In terms of assembly, F-type ATPases have 2 components, CF(1) - the catalytic core - and CF(0) - the membrane proton channel. CF(1) has five subunits: alpha(3), beta(3), gamma(1), delta(1), epsilon(1). CF(0) has three main subunits: a, b and c.

It is found in the cell inner membrane. Its function is as follows. Produces ATP from ADP in the presence of a proton gradient across the membrane. The chain is ATP synthase epsilon chain from Shewanella halifaxensis (strain HAW-EB4).